The sequence spans 373 residues: ATP-dependent 6-phosphofructokinase (373 aa).

Residues Gly-12, 74–75, and 110–113 contribute to the ATP site; these read RD and GGGT. Substrate is bound by residues 133 to 135, Arg-170, 177 to 179, Glu-230, Arg-291, and 297 to 300; these read TID, MGH, and YVQR. The active-site Proton acceptor is Asp-135.

This sequence belongs to the phosphofructokinase type A (PFKA) family. Mixed-substrate PFK group III subfamily. As to quaternary structure, homodimer or homotetramer. Requires Mg(2+) as cofactor.

The protein localises to the cytoplasm. The catalysed reaction is beta-D-fructose 6-phosphate + ATP = beta-D-fructose 1,6-bisphosphate + ADP + H(+). It functions in the pathway carbohydrate degradation; glycolysis; D-glyceraldehyde 3-phosphate and glycerone phosphate from D-glucose: step 3/4. Catalyzes the phosphorylation of D-fructose 6-phosphate to fructose 1,6-bisphosphate by ATP, the first committing step of glycolysis. This chain is ATP-dependent 6-phosphofructokinase, found in Propionibacterium freudenreichii subsp. shermanii (strain ATCC 9614 / DSM 4902 / CIP 103027 / NCIMB 8099 / CIRM-BIA1).